A 115-amino-acid chain; its full sequence is Variant surface glycoprotein ANTAT 1.8 (115 aa).

An N-linked (GlcNAc...) asparagine glycan is attached at N42. D92 carries the GPI-anchor amidated aspartate lipid modification. Positions S93 to F115 are cleaved as a propeptide — removed in mature form.

The protein resides in the cell membrane. Functionally, VSG forms a coat on the surface of the parasite. The trypanosome evades the immune response of the host by expressing a series of antigenically distinct VSGs from an estimated 1000 VSG genes. The polypeptide is Variant surface glycoprotein ANTAT 1.8 (Trypanosoma brucei brucei).